The following is a 151-amino-acid chain: Flagellar assembly factor FliW (151 aa).

This sequence belongs to the FliW family. Interacts with translational regulator CsrA and flagellin(s).

The protein localises to the cytoplasm. Functionally, acts as an anti-CsrA protein, binds CsrA and prevents it from repressing translation of its target genes, one of which is flagellin. Binds to flagellin and participates in the assembly of the flagellum. This is Flagellar assembly factor FliW from Halalkalibacterium halodurans (strain ATCC BAA-125 / DSM 18197 / FERM 7344 / JCM 9153 / C-125) (Bacillus halodurans).